Here is a 274-residue protein sequence, read N- to C-terminus: Large ribosomal subunit protein uL2cz/uL2cy (274 aa).

Residues 224-274 (NPVDHPHGGGEGRAPIGRKKPTTPWGYPALGRRSRKRNKYSDNLILRRRSK) are disordered.

The protein belongs to the universal ribosomal protein uL2 family. In terms of assembly, part of the 50S ribosomal subunit.

The protein resides in the plastid. It localises to the chloroplast. This is Large ribosomal subunit protein uL2cz/uL2cy (rpl2-A) from Panax ginseng (Korean ginseng).